Consider the following 120-residue polypeptide: Prefoldin subunit beta (120 aa).

The protein belongs to the prefoldin subunit beta family. As to quaternary structure, heterohexamer of two alpha and four beta subunits.

The protein resides in the cytoplasm. Functionally, molecular chaperone capable of stabilizing a range of proteins. Seems to fulfill an ATP-independent, HSP70-like function in archaeal de novo protein folding. In Methanopyrus kandleri (strain AV19 / DSM 6324 / JCM 9639 / NBRC 100938), this protein is Prefoldin subunit beta (pfdB).